The primary structure comprises 891 residues: DNA mismatch repair protein MutS (891 aa).

646–653 (GPNMAGKS) is an ATP binding site.

The protein belongs to the DNA mismatch repair MutS family.

In terms of biological role, this protein is involved in the repair of mismatches in DNA. It is possible that it carries out the mismatch recognition step. This protein has a weak ATPase activity. The polypeptide is DNA mismatch repair protein MutS (Rickettsia typhi (strain ATCC VR-144 / Wilmington)).